The sequence spans 367 residues: FAD synthetase 2, chloroplastic (367 aa).

The N-terminal 57 residues, 1–57 (MLCGGSRVLQHLSDHNHHNSIGLGLGFCGAKIVQLSSFFLRPSQAMAKSHHFSRKLR), are a transit peptide targeting the chloroplast.

It depends on Mg(2+) as a cofactor.

The protein localises to the plastid. It localises to the chloroplast. The enzyme catalyses FMN + ATP + H(+) = FAD + diphosphate. It functions in the pathway cofactor biosynthesis; FAD biosynthesis; FAD from FMN: step 1/1. In terms of biological role, catalyzes the adenylation of flavin mononucleotide (FMN) to form flavin adenine dinucleotide (FAD) coenzyme. The chain is FAD synthetase 2, chloroplastic from Arabidopsis thaliana (Mouse-ear cress).